Consider the following 66-residue polypeptide: uncharacterized protein (66 aa).

The HTH cro/C1-type domain maps to 5–59; the sequence is LKYYRALHNLTQEDLAKKLGVSRQTIIAIEKGKYDPSLKLAFKIAKFFGVKIEDI. Positions 16 to 35 form a DNA-binding region, H-T-H motif; that stretch reads QEDLAKKLGVSRQTIIAIEK.

This is an uncharacterized protein from Methanocaldococcus jannaschii (strain ATCC 43067 / DSM 2661 / JAL-1 / JCM 10045 / NBRC 100440) (Methanococcus jannaschii).